Consider the following 298-residue polypeptide: MNKTWKKAATVLAFAGIALSATACSGGKAVVTYKGGKITESQYYDKMKESQAGQSTLASMIVSDALESQYGKDVTQKQVDKEYNKYKKQYGSQFDSVLEQNGMTASTFKDNLKTNLLTEAALKHIKKITPAQEKKAWKNYQPEVTVQHILVSKKSTAEDVIKQLQDGGDFKKLAKKYSTDTATKNDAGKLPAFDSTDSTLDSSFKTAAFKLKTGEITTTPVKTQYGYHVIKMIKHPAKGTFKEHKKQIDNQIYQSMSEDQNVMRSVIATVLKRADVSIKDKDLKNVLSQYVSSDSLSK.

A signal peptide spans 1–23 (MNKTWKKAATVLAFAGIALSATA). Cysteine 24 carries the N-palmitoyl cysteine lipid modification. Residue cysteine 24 is the site of S-diacylglycerol cysteine attachment. The 94-residue stretch at 141 to 234 (QPEVTVQHIL…YGYHVIKMIK (94 aa)) folds into the PpiC domain.

It belongs to the PrsA family.

Its subcellular location is the cell membrane. It carries out the reaction [protein]-peptidylproline (omega=180) = [protein]-peptidylproline (omega=0). In terms of biological role, plays a major role in protein secretion by helping the post-translocational extracellular folding of several secreted proteins. The polypeptide is Foldase protein PrsA 1 (prsA1) (Lactobacillus johnsonii (strain CNCM I-12250 / La1 / NCC 533)).